The following is a 181-amino-acid chain: Oligoribonuclease (181 aa).

The 164-residue stretch at 8–171 (LIWIDLEMTG…DDIRESVAEL (164 aa)) folds into the Exonuclease domain. Tyr-129 is a catalytic residue.

This sequence belongs to the oligoribonuclease family.

It is found in the cytoplasm. In terms of biological role, 3'-to-5' exoribonuclease specific for small oligoribonucleotides. This is Oligoribonuclease from Yersinia pseudotuberculosis serotype O:1b (strain IP 31758).